Reading from the N-terminus, the 224-residue chain is Uridylate kinase (224 aa).

An ATP-binding site is contributed by 9-10 (GS). Residue glycine 43 coordinates UMP. Glycine 44 and arginine 48 together coordinate ATP. UMP contacts are provided by residues aspartate 65 and 113–119 (VVPGQTT). Positions 139, 145, and 148 each coordinate ATP.

Belongs to the UMP kinase family. Homohexamer.

The protein localises to the cytoplasm. It catalyses the reaction UMP + ATP = UDP + ADP. It participates in pyrimidine metabolism; CTP biosynthesis via de novo pathway; UDP from UMP (UMPK route): step 1/1. Its activity is regulated as follows. Inhibited by UTP. Its function is as follows. Catalyzes the reversible phosphorylation of UMP to UDP. The chain is Uridylate kinase from Methanocella arvoryzae (strain DSM 22066 / NBRC 105507 / MRE50).